Reading from the N-terminus, the 236-residue chain is Small ribosomal subunit protein uS2c (236 aa).

The protein belongs to the universal ribosomal protein uS2 family.

The protein localises to the plastid. Its subcellular location is the chloroplast. This is Small ribosomal subunit protein uS2c (rps2) from Illicium oligandrum (Star anise).